The primary structure comprises 1475 residues: Sterol 3-beta-glucosyltransferase (1475 aa).

2 disordered regions span residues 1–73 (MPPP…PPMF) and 94–218 (HDRF…EDDK). A compositionally biased stretch (low complexity) spans 8 to 17 (LPLHGPAGAA). Residues 30–40 (RVGKKLQKKRH) show a composition bias toward basic residues. Over residues 108-118 (GPQRDSADRSH) the composition is skewed to basic and acidic residues. Over residues 156–168 (EKHKRKISGHKLL) the composition is skewed to basic residues. A GRAM 1 domain is found at 270-315 (QDIFEFDQPEAVIEEYPCWLLQSVLLQGYMYITAKHICFYSYLPKK). Residues 318–413 (EVVKSGYLSK…WVKSLQRVIF (96 aa)) enclose the PH domain. Disordered stretches follow at residues 492 to 541 (ARLK…TTNK), 594 to 636 (SSPR…MEEP), and 653 to 715 (QILR…PVTP). Positions 505–531 (QQQQQQHPMQPPMQASARSSMSGSRRA) are enriched in low complexity. Composition is skewed to polar residues over residues 621–634 (QQGSTDSYVQSSME) and 653–674 (QILRGSDVFQNPTMRRSGSASR). Residues 675–686 (TEVEKQQRRDPR) are compositionally biased toward basic and acidic residues. A GRAM 2 domain is found at 798-901 (RFRAHFALPE…RDDCAVTLLQ (104 aa)). UDP-alpha-D-glucose is bound by residues Ser989, Arg990, Asp992, Ala1293, His1295, His1308, Ser1311, Gly1312, Thr1313, Asp1332, and Gln1333. A disordered region spans residues 1413–1475 (IQVEPDEDEE…RVSPSQQSVA (63 aa)). Over residues 1416–1425 (EPDEDEESAE) the composition is skewed to acidic residues.

This sequence belongs to the glycosyltransferase 28 family.

The protein localises to the cytoplasm. It is found in the preautophagosomal structure membrane. It carries out the reaction a sterol + UDP-alpha-D-glucose = a sterol 3-beta-D-glucoside + UDP + H(+). The catalysed reaction is ergosterol + UDP-alpha-D-glucose = ergosteryl 3-beta-D-glucoside + UDP + H(+). Its function is as follows. Sterol glycosyltransferase responsible for the glycosylation of ergosterol to form ergosterol-glucoside. Mediates autophagic degradation of peroxisomes (pexophagy) and is involved in pathogenesis via peroxisome degradation inside appressoria that are developing into the host invasion stage. The sequence is that of Sterol 3-beta-glucosyltransferase from Glomerella lagenarium (Anthracnose fungus).